We begin with the raw amino-acid sequence, 235 residues long: Orotidine 5'-phosphate decarboxylase (235 aa).

Residues Asp10, Lys33, 60-69 (DLKMNDIPNT), Thr123, Arg185, Gln194, Gly214, and Arg215 each bind substrate. Catalysis depends on Lys62, which acts as the Proton donor.

This sequence belongs to the OMP decarboxylase family. Type 1 subfamily. As to quaternary structure, homodimer.

The enzyme catalyses orotidine 5'-phosphate + H(+) = UMP + CO2. The protein operates within pyrimidine metabolism; UMP biosynthesis via de novo pathway; UMP from orotate: step 2/2. Catalyzes the decarboxylation of orotidine 5'-monophosphate (OMP) to uridine 5'-monophosphate (UMP). This chain is Orotidine 5'-phosphate decarboxylase, found in Lactobacillus johnsonii (strain CNCM I-12250 / La1 / NCC 533).